We begin with the raw amino-acid sequence, 804 residues long: Probable exo-1,4-beta-xylosidase xlnD (804 aa).

The first 17 residues, 1 to 17, serve as a signal peptide directing secretion; that stretch reads MAVAALALLALLPQALG. 5 N-linked (GlcNAc...) asparagine glycosylation sites follow: asparagine 20, asparagine 115, asparagine 139, asparagine 234, and asparagine 243. Aspartate 307 is an active-site residue. Residues asparagine 349, asparagine 382, asparagine 404, asparagine 433, asparagine 444, asparagine 485, asparagine 489, asparagine 621, asparagine 652, asparagine 666, asparagine 688, and asparagine 710 are each glycosylated (N-linked (GlcNAc...) asparagine).

Belongs to the glycosyl hydrolase 3 family.

It is found in the secreted. The enzyme catalyses Hydrolysis of (1-&gt;4)-beta-D-xylans, to remove successive D-xylose residues from the non-reducing termini.. It functions in the pathway glycan degradation; xylan degradation. In terms of biological role, xylan 1,4-beta-xylosidase involved in the hydrolysis of xylan, a major structural heterogeneous polysaccharide found in plant biomass representing the second most abundant polysaccharide in the biosphere, after cellulose. In Aspergillus japonicus, this protein is Probable exo-1,4-beta-xylosidase xlnD (xlnD).